Here is an 858-residue protein sequence, read N- to C-terminus: MENTTPLRKQYLDIKKNYPEAIVFFRLGDFYETFEEDARIAARELEIVLTSREMGKGLKVPLAGIPYHALDNYLSRLINKGYKVAICEQVTKPGETKGLVQRQVTRLVTPGTVVEPNLLQTKQNNFLLSLYLTEDSCGLAFADISTSEFGCTQTNISELEAEISRLSPAEIILPKNQSLNLPIHLKATISKLDGYYFEADIARERLLRHFECQNLSAYGCENMPLAISAAGALLNYLEETQKSSLKQLERLSVYTTADYMQMDSHTLSNLEIFRSSGGNSLKGSLLGILDQTKTAMGGRLLRKFLGQPLLKQSDIEKRLSAVDYFFEESLARTSLAKSLGQIADMERMANRIRQKTILPRELISLKNSLETVSAIHRQFGLMPPPRLAYFLNGLKPLPEMLDIINKTITDDPPSTLGDGKVIRAGFDPEMDKLCSLAGDARTFLSQMETRERERTGIKSLKLGYNRVFGYYIEISNANLGDVPPEFIRKQTLVNAERFITPELKEYENLILNAKERLLEMETGLYEQVLNQLGGFYSALLANATALAALDVLSAFAEVAVRNSYVRPVFHPENRLDIRKGRHPMVEQGLGYGSFVANDISLSAEDCQIIILTGPNMAGKSTYLKQTALIVLMAQIGSYVPAETAELCLTDRIFTRIGAREDLSAGQSTFMVEMVETASILNTATSRSLLILDEIGRGTSTYDGLAIAQAVVEYIHSQPSLTAKTLFATHYHELVELASYLPRVKNYNIAVSEDRGEVVFLHKIVPGGVDKSYGIHVAKLAGLPKWVIKRAYEVLTELENPAKKQPKSRTCQSQLQLPMTGQTSVLEEEIKELEIESLTPLAALNKLYELKKKAEEQGL.

Residue 613–620 (GPNMAGKS) coordinates ATP.

This sequence belongs to the DNA mismatch repair MutS family.

Functionally, this protein is involved in the repair of mismatches in DNA. It is possible that it carries out the mismatch recognition step. This protein has a weak ATPase activity. This chain is DNA mismatch repair protein MutS, found in Dehalococcoides mccartyi (strain CBDB1).